The sequence spans 364 residues: DNA replication and repair protein RecF (364 aa).

An ATP-binding site is contributed by 30 to 37; it reads GDNGAGKT.

The protein belongs to the RecF family.

The protein resides in the cytoplasm. Its function is as follows. The RecF protein is involved in DNA metabolism; it is required for DNA replication and normal SOS inducibility. RecF binds preferentially to single-stranded, linear DNA. It also seems to bind ATP. This is DNA replication and repair protein RecF from Stenotrophomonas maltophilia (strain R551-3).